The chain runs to 494 residues: NADH-quinone oxidoreductase subunit M (494 aa).

14 helical membrane passes run 5-25 (PIISITIFLPLISVLYILLFI), 37-57 (TMYVAVLSSVLTFISTIYILI), 89-109 (ISIFFVSLTSFLTLICIIGSL), 115-135 (YIKEYLVCFLLMESFCIGAFT), 139-159 (LLVFYLFFEVILVPMYIIIGV), 172-192 (FFLYTFFGSVFFLLSIIYIYS), 216-236 (ILWWAIFIAFAIKIPMIPFHT), 251-271 (VILAGILLKLGGYGFLRVLLP), 280-300 (FAIYVIWLSVIAIIYASLVAL), 308-328 (MIAYSSITHMGYVTIGIFSFT), 334-354 (GALFQMLSHGIISSCLFLIVG), 375-395 (MPVLATFFMIAMLGSVGLPGT), 411-431 (VNVIATFLAALGIILGAIYML), and 458-478 (IISIAPLILLIIYFGLMPSSI).

Belongs to the complex I subunit 4 family.

It is found in the cell membrane. It catalyses the reaction a quinone + NADH + 5 H(+)(in) = a quinol + NAD(+) + 4 H(+)(out). Functionally, NDH-1 shuttles electrons from NADH, via FMN and iron-sulfur (Fe-S) centers, to quinones in the respiratory chain. Couples the redox reaction to proton translocation (for every two electrons transferred, four hydrogen ions are translocated across the cytoplasmic membrane), and thus conserves the redox energy in a proton gradient. The protein is NADH-quinone oxidoreductase subunit M (nuoM) of Rickettsia bellii (strain RML369-C).